Reading from the N-terminus, the 211-residue chain is Phosphoserine phosphatase 1 (211 aa).

The Tele-phosphohistidine intermediate role is filled by His9. The active site involves His150.

This sequence belongs to the histidine phosphatase superfamily. Metal-independent phosphoserine phosphatase family. Homodimer. Can also form a heterodimer with PspB.

It catalyses the reaction O-phospho-L-serine + H2O = L-serine + phosphate. The catalysed reaction is O-phospho-D-serine + H2O = D-serine + phosphate. It participates in amino-acid biosynthesis; L-serine biosynthesis; L-serine from 3-phospho-D-glycerate: step 3/3. Activity is not inhibited by EDTA in vitro, nor enhanced by the addition of Mg(2+). Catalyzes the dephosphorylation of L-phosphoserine to serine and inorganic phosphate. Is poorly or not active toward D-phosphoserine, DL-phosphothreonine, 3-phosphoglycerate, para-nitrophenylphosphate, and fructose-6-phosphate. Does not display phosphoglycerate mutase activity. The chain is Phosphoserine phosphatase 1 (pspA) from Hydrogenobacter thermophilus (strain DSM 6534 / IAM 12695 / TK-6).